Consider the following 319-residue polypeptide: Olfactory receptor 13F1 (319 aa).

Residues 1-25 lie on the Extracellular side of the membrane; that stretch reads MFPANWTSVKVFFFLGFFHYPKVQV. The N-linked (GlcNAc...) asparagine glycan is linked to asparagine 5. The helical transmembrane segment at 26-46 threads the bilayer; sequence IIFAVCLLMYLITLLGNIFLI. The Cytoplasmic segment spans residues 47–54; sequence SITILDSH. Residues 55–75 traverse the membrane as a helical segment; it reads LHTPMYLFLSNLSFLDIWYSS. Residues 76–99 are Extracellular-facing; it reads SALSPMLANFVSGRNTISFSGCAT. An intrachain disulfide couples cysteine 97 to cysteine 189. The helical transmembrane segment at 100-120 threads the bilayer; the sequence is QMYLSLAMGSTECVLLPMMAY. The Cytoplasmic segment spans residues 121 to 139; the sequence is DRYVAICNPLRYPVIMNRR. Residues 140 to 160 traverse the membrane as a helical segment; sequence TCVQIAAGSWMTGCLTAMVEM. Topologically, residues 161 to 197 are extracellular; the sequence is MSVLPLSLCGNSIINHFTCEILAILKLVCVDTSLVQL. The chain crosses the membrane as a helical span at residues 198-217; the sequence is IMLVISVLLLPMPMLLICIS. At 218–237 the chain is on the cytoplasmic side; it reads YAFILASILRISSVEGRSKA. A helical membrane pass occupies residues 238–258; sequence FSTCTAHLMVVVLFYGTALSM. Over 259-271 the chain is Extracellular; that stretch reads HLKPSAVDSQEID. A helical transmembrane segment spans residues 272 to 292; the sequence is KFMALVYAGQTPMLNPIIYSL. At 293 to 319 the chain is on the cytoplasmic side; it reads RNKEVKVALKKLLIRNHFNTAFISILK.

Belongs to the G-protein coupled receptor 1 family.

It localises to the cell membrane. In terms of biological role, odorant receptor. This Homo sapiens (Human) protein is Olfactory receptor 13F1 (OR13F1).